Consider the following 154-residue polypeptide: Probable prefoldin subunit 5 (154 aa).

It belongs to the prefoldin subunit alpha family. Heterohexamer of two PFD-alpha type and four PFD-beta type subunits.

Its function is as follows. Binds specifically to cytosolic chaperonin (c-CPN) and transfers target proteins to it. Binds to nascent polypeptide chain and promotes folding in an environment in which there are many competing pathways for nonnative proteins. The polypeptide is Probable prefoldin subunit 5 (Caenorhabditis briggsae).